A 56-amino-acid chain; its full sequence is Sex-specific storage protein 1 (56 aa).

Belongs to the hemocyanin family. In terms of tissue distribution, expressed in fat body and ovary.

Its subcellular location is the secreted. Its function is as follows. Larval storage protein (LSP) which may serve as a store of amino acids for synthesis of adult proteins. The biosynthesis, accumulation and sequestration of storage protein-1 takes place during metamorphosis and saves energy for the non-feeding pupal stage. May also be essential for egg formation. The chain is Sex-specific storage protein 1 from Amsacta albistriga (Red hairy caterpillar).